Here is a 473-residue protein sequence, read N- to C-terminus: ATP synthase subunit beta (473 aa).

153-160 (GGAGVGKT) contributes to the ATP binding site.

The protein belongs to the ATPase alpha/beta chains family. As to quaternary structure, F-type ATPases have 2 components, CF(1) - the catalytic core - and CF(0) - the membrane proton channel. CF(1) has five subunits: alpha(3), beta(3), gamma(1), delta(1), epsilon(1). CF(0) has three main subunits: a(1), b(2) and c(9-12). The alpha and beta chains form an alternating ring which encloses part of the gamma chain. CF(1) is attached to CF(0) by a central stalk formed by the gamma and epsilon chains, while a peripheral stalk is formed by the delta and b chains.

Its subcellular location is the cell inner membrane. It carries out the reaction ATP + H2O + 4 H(+)(in) = ADP + phosphate + 5 H(+)(out). Functionally, produces ATP from ADP in the presence of a proton gradient across the membrane. The catalytic sites are hosted primarily by the beta subunits. This is ATP synthase subunit beta from Rickettsia bellii (strain OSU 85-389).